Here is a 995-residue protein sequence, read N- to C-terminus: Translation initiation factor IF-2 (995 aa).

The disordered stretch occupies residues 53–399 (NNAGSPAPAA…SGAPRGQGQV (347 aa)). 2 stretches are compositionally biased toward pro residues: residues 60–87 (PAAP…PPGG) and 104–119 (TPGP…PPQS). Low complexity predominate over residues 135 to 160 (AAAEARAAALKAEQEAAVKAAQAARQ). The span at 161–171 (QQRENVRREPP) shows a compositional bias: basic and acidic residues. Positions 177–192 (RPGPRPGPGTMPPRPG) are enriched in pro residues. Positions 193-202 (SPAAGRSGAP) are enriched in low complexity. Pro residues-rich tracts occupy residues 203–213 (APGPGPRPGGR) and 242–264 (RPSP…PSPA). The span at 273–363 (RPGGPGSGRP…GAAGAFGRPG (91 aa)) shows a compositional bias: gly residues. Over residues 367 to 376 (TRGRKSKKQR) the composition is skewed to basic residues. In terms of domain architecture, tr-type G spans 486 to 658 (SRPPVVTVMG…VLLTADASLE (173 aa)). Residues 495–502 (GHVDHGKT) are G1. 495 to 502 (GHVDHGKT) contacts GTP. The G2 stretch occupies residues 520 to 524 (GITQH). The tract at residues 545-548 (DTPG) is G3. Residues 545–549 (DTPGH) and 599–602 (NKID) contribute to the GTP site. The G4 stretch occupies residues 599–602 (NKID). The segment at 635–637 (AAK) is G5.

The protein belongs to the TRAFAC class translation factor GTPase superfamily. Classic translation factor GTPase family. IF-2 subfamily.

The protein localises to the cytoplasm. In terms of biological role, one of the essential components for the initiation of protein synthesis. Protects formylmethionyl-tRNA from spontaneous hydrolysis and promotes its binding to the 30S ribosomal subunits. Also involved in the hydrolysis of GTP during the formation of the 70S ribosomal complex. The chain is Translation initiation factor IF-2 from Salinispora arenicola (strain CNS-205).